The following is a 644-amino-acid chain: Mitochondrial 15S rRNA processing factor CCM1 (644 aa).

Residues 1–38 (MVIVASSNMLRPDRIWLCGKYQTARTLYVVGNKSKRRN) constitute a mitochondrion transit peptide. Residues 78–108 (ISKKSEKEVERSQIQSTEPSPETSTQLTQKN) are disordered. Polar residues predominate over residues 89-108 (SQIQSTEPSPETSTQLTQKN). PPR repeat units lie at residues 245 to 279 (PRET…GLQP), 280 to 315 (SKNT…SDKT), and 318 to 352 (AERA…KVEV).

The protein belongs to the CCM1 family. As to quaternary structure, binds to mitochondrial small subunit 15S rRNA.

It is found in the mitochondrion. Regulates mitochondrial small subunit maturation by controlling 15S rRNA 5'-end processing. Localizes to the 5' precursor of the 15S rRNA in a position that is subsequently occupied by mS47 in the mature yeast mtSSU. Uses structure and sequence-specific RNA recognition, binding to a single-stranded region of the precursor and specifically recognizing bases -6 to -1. The exchange of Ccm1 for mS47 is coupled to the irreversible removal of precursor rRNA that is accompanied by conformational changes of the mitoribosomal proteins uS5m and mS26. These conformational changes signal completion of 5'-end rRNA processing through protection of the mature 5'-end of the 15S rRNA and stabilization of mS47. The removal of the 5' precursor together with the dissociation of Ccm1 may be catalyzed by the 5'-3' exoribonuclease Pet127. Involved in the specific removal of group I introns in mitochondrial encoded transcripts. The chain is Mitochondrial 15S rRNA processing factor CCM1 (CCM1) from Meyerozyma guilliermondii (strain ATCC 6260 / CBS 566 / DSM 6381 / JCM 1539 / NBRC 10279 / NRRL Y-324) (Yeast).